The sequence spans 908 residues: Translation initiation factor IF-2 (908 aa).

The disordered stretch occupies residues 145 to 312 (EIPGLTQRAK…KGKKRQAEKI (168 aa)). Basic and acidic residues predominate over residues 167 to 177 (VVERPEARPSA). Low complexity-rich tracts occupy residues 194–217 (RPEGGYRPAGPRPAGQRPEGPRPG) and 263–276 (VAGAGKKGPAGAAV). The segment covering 278–296 (KRKEEFKKTELFEKHERVF) has biased composition (basic and acidic residues). Residues 408–577 (KRPPVVTIMG…LLQADVLELK (170 aa)) form the tr-type G domain. A G1 region spans residues 417-424 (GHVDHGKT). 417 to 424 (GHVDHGKT) contacts GTP. Residues 442–446 (GITQH) form a G2 region. The tract at residues 463–466 (DTPG) is G3. GTP is bound by residues 463-467 (DTPGH) and 517-520 (NKID). Residues 517-520 (NKID) are G4. The G5 stretch occupies residues 553–555 (SAK).

Belongs to the TRAFAC class translation factor GTPase superfamily. Classic translation factor GTPase family. IF-2 subfamily.

It is found in the cytoplasm. One of the essential components for the initiation of protein synthesis. Protects formylmethionyl-tRNA from spontaneous hydrolysis and promotes its binding to the 30S ribosomal subunits. Also involved in the hydrolysis of GTP during the formation of the 70S ribosomal complex. The chain is Translation initiation factor IF-2 from Geotalea daltonii (strain DSM 22248 / JCM 15807 / FRC-32) (Geobacter daltonii).